We begin with the raw amino-acid sequence, 1131 residues long: ATP-dependent helicase FUN30 (1131 aa).

The interval Met1–Ser70 is disordered. A compositionally biased stretch (polar residues) spans Pro16–Thr36. Positions Val76–Leu111 are CUE-like region. The tract at residues Gln114 to Leu141 is disordered. A Phosphoserine modification is found at Ser232. Disordered regions lie at residues Lys242 to Ser273 and Asn327 to Ser350. The segment covering Asn250 to Thr271 has biased composition (acidic residues). Ser369 carries the post-translational modification Phosphoserine. The segment at Asp400 to Glu533 is disordered. Positions Gly405–Asn416 are enriched in acidic residues. Residues Asn417 to Ala432 show a composition bias toward low complexity. Residues Thr433 to Ala442 are compositionally biased toward basic and acidic residues. Ser451 carries the phosphoserine modification. The span at Glu480–Glu533 shows a compositional bias: acidic residues. The region spanning Asn584–Asn752 is the Helicase ATP-binding domain. Asp597–Thr604 lines the ATP pocket. The DEGH box signature appears at Asp703–His706. In terms of domain architecture, Helicase C-terminal spans Ala953 to Glu1108.

This sequence belongs to the SNF2/RAD54 helicase family. Homodimer.

Its subcellular location is the nucleus. It localises to the chromosome. It catalyses the reaction ATP + H2O = ADP + phosphate + H(+). Functionally, DNA helicase that possesses intrinsic ATP-dependent nucleosome-remodeling activity and is both required for DNA repair and heterochromatin organization. Promotes DNA end resection of double-strand breaks (DSBs) following DNA damage: probably acts by weakening histone DNA interactions in nucleosomes flanking DSBs, facilitating single-stranded DNA (ssDNA) production by the EXO1 and SGS1 machinery. Promotes gene silencing at heterochromatin by regulating the chromatin structure within or around silent loci. Also required for heterochromatin organization at centromeres. This chain is ATP-dependent helicase FUN30 (FUN30), found in Saccharomyces cerevisiae (strain ATCC 204508 / S288c) (Baker's yeast).